The following is a 100-amino-acid chain: Large ribosomal subunit protein uL23 (100 aa).

This sequence belongs to the universal ribosomal protein uL23 family. Part of the 50S ribosomal subunit. Contacts protein L29, and trigger factor when it is bound to the ribosome.

Its function is as follows. One of the early assembly proteins it binds 23S rRNA. One of the proteins that surrounds the polypeptide exit tunnel on the outside of the ribosome. Forms the main docking site for trigger factor binding to the ribosome. This Yersinia pestis bv. Antiqua (strain Antiqua) protein is Large ribosomal subunit protein uL23.